The primary structure comprises 900 residues: Bifunctional uridylyltransferase/uridylyl-removing enzyme (900 aa).

A uridylyltransferase region spans residues 1–342 (MPQVDPELFD…PCEQPVQIQP (342 aa)). Positions 343–705 (LNSRFQLRDG…TTQREFESGS (363 aa)) are uridylyl-removing. In terms of domain architecture, HD spans 461–583 (VDAHTLNLIK…VGDQTHLDYL (123 aa)). 2 ACT domains span residues 706-789 (QIFI…IIQR) and 816-891 (VLEV…DNGR).

The protein belongs to the GlnD family. The cofactor is Mg(2+).

It carries out the reaction [protein-PII]-L-tyrosine + UTP = [protein-PII]-uridylyl-L-tyrosine + diphosphate. The enzyme catalyses [protein-PII]-uridylyl-L-tyrosine + H2O = [protein-PII]-L-tyrosine + UMP + H(+). Uridylyltransferase (UTase) activity is inhibited by glutamine, while glutamine activates uridylyl-removing (UR) activity. Functionally, modifies, by uridylylation and deuridylylation, the PII regulatory proteins (GlnB and homologs), in response to the nitrogen status of the cell that GlnD senses through the glutamine level. Under low glutamine levels, catalyzes the conversion of the PII proteins and UTP to PII-UMP and PPi, while under higher glutamine levels, GlnD hydrolyzes PII-UMP to PII and UMP (deuridylylation). Thus, controls uridylylation state and activity of the PII proteins, and plays an important role in the regulation of nitrogen assimilation and metabolism. This chain is Bifunctional uridylyltransferase/uridylyl-removing enzyme, found in Pseudomonas aeruginosa (strain UCBPP-PA14).